A 370-amino-acid chain; its full sequence is Sodium-dependent organic anion transporter (370 aa).

Residues M1 to M24 form a disordered region. The Extracellular portion of the chain corresponds to M1 to L32. N-linked (GlcNAc...) asparagine glycosylation is found at N8 and N14. A helical membrane pass occupies residues V33–V53. Residues E54 to G67 are Cytoplasmic-facing. Residues I68–I88 form a helical membrane-spanning segment. Residues G89 to A97 lie on the Extracellular side of the membrane. Residues I98–W118 form a helical membrane-spanning segment. Over V119–S126 the chain is Cytoplasmic. The chain crosses the membrane as a helical span at residues I127 to V147. Over Y148 to T159 the chain is Extracellular. Residues I160–I180 traverse the membrane as a helical segment. Residues Y181–K195 lie on the Cytoplasmic side of the membrane. The helical transmembrane segment at V196–A216 threads the bilayer. Topologically, residues K217–T224 are extracellular. A helical transmembrane segment spans residues L225–F245. The Cytoplasmic portion of the chain corresponds to L246–N265. Residues I266–V283 form a helical membrane-spanning segment. Position 284 (Q284) is a topological domain, extracellular. Residues L285–A305 traverse the membrane as a helical segment. The Cytoplasmic segment spans residues A306–E370.

Belongs to the bile acid:sodium symporter (BASS) (TC 2.A.28) family. In terms of processing, glycosylated. As to expression, highly expressed in heart, lung, spleen and adrenal gland. Moderately expressed in skeletal muscle, testis and small intestine.

The protein resides in the membrane. It carries out the reaction estrone 3-sulfate(out) + 2 Na(+)(out) = estrone 3-sulfate(in) + 2 Na(+)(in). The catalysed reaction is 17beta-estradiol 3-sulfate(out) + 2 Na(+)(out) = 17beta-estradiol 3-sulfate(in) + 2 Na(+)(in). It catalyses the reaction dehydroepiandrosterone 3-sulfate(out) + 2 Na(+)(out) = dehydroepiandrosterone 3-sulfate(in) + 2 Na(+)(in). The enzyme catalyses androst-5-ene-diol 3-sulfate(out) + 2 Na(+)(out) = androst-5-ene-diol 3-sulfate(in) + 2 Na(+)(in). It carries out the reaction pregnenolone sulfate(out) + 2 Na(+)(out) = pregnenolone sulfate(in) + 2 Na(+)(in). The catalysed reaction is taurolithocholate 3-sulfate(out) + 2 Na(+)(out) = taurolithocholate 3-sulfate(in) + 2 Na(+)(in). It catalyses the reaction androsterone 3alpha-sulfate(out) + 2 Na(+)(out) = androsterone 3alpha-sulfate(in) + 2 Na(+)(in). The enzyme catalyses 5alpha-dihydrotestosterone sulfate(out) + 2 Na(+)(out) = 5alpha-dihydrotestosterone sulfate(in) + 2 Na(+)(in). It carries out the reaction 17beta-estradiol 17-sulfate(out) + 2 Na(+)(out) = 17beta-estradiol 17-sulfate(in) + 2 Na(+)(in). The catalysed reaction is 17alpha-hydroxypregnenolone 3-sulfate(out) + 2 Na(+)(out) = 17alpha-hydroxypregnenolone 3-sulfate(in) + 2 Na(+)(in). It catalyses the reaction epiandrosterone 3-sulfate(out) + 2 Na(+)(out) = epiandrosterone 3-sulfate(in) + 2 Na(+)(in). The enzyme catalyses epitestosterone 17-sulfate(out) + 2 Na(+)(out) = epitestosterone 17-sulfate(in) + 2 Na(+)(in). It carries out the reaction testosterone 17-sulfate(out) + 2 Na(+)(out) = testosterone 17-sulfate(in) + 2 Na(+)(in). The catalysed reaction is 16alpha-hydroxydehydroepiandrosterone 3-sulfate(out) + 2 Na(+)(out) = 16alpha-hydroxydehydroepiandrosterone 3-sulfate(in) + 2 Na(+)(in). Functionally, transports sulfoconjugated steroid hormones from the extracellular compartment into the cytosol in a sodium-dependent manner without hydrolysis. Steroid sulfate hormones are commonly considered to be biologically inactive metabolites, that may be activated by steroid sulfatases into free steroids. May play an important role by delivering sulfoconjugated steroids to specific target cells in reproductive organs. May play a role transporting the estriol precursor 16alpha-hydroxydehydroepiandrosterone 3-sulfate (16a-OH-DHEAS) at the fetal blood vessel endothelium. Can also transport other sulfoconjugated molecules such as taurolithocholic acid-3-sulfate and sulfoconjugated pyrenes. In Rattus norvegicus (Rat), this protein is Sodium-dependent organic anion transporter (Slc10a6).